We begin with the raw amino-acid sequence, 177 residues long: Acireductone dioxygenase (177 aa).

Fe(2+)-binding residues include histidine 99, histidine 101, glutamate 105, and histidine 143. Residues histidine 99, histidine 101, glutamate 105, and histidine 143 each coordinate Ni(2+).

This sequence belongs to the acireductone dioxygenase (ARD) family. In terms of assembly, monomer. Fe(2+) serves as cofactor. It depends on Ni(2+) as a cofactor.

The enzyme catalyses 1,2-dihydroxy-5-(methylsulfanyl)pent-1-en-3-one + O2 = 3-(methylsulfanyl)propanoate + CO + formate + 2 H(+). It catalyses the reaction 1,2-dihydroxy-5-(methylsulfanyl)pent-1-en-3-one + O2 = 4-methylsulfanyl-2-oxobutanoate + formate + 2 H(+). The protein operates within amino-acid biosynthesis; L-methionine biosynthesis via salvage pathway; L-methionine from S-methyl-5-thio-alpha-D-ribose 1-phosphate: step 5/6. Catalyzes 2 different reactions between oxygen and the acireductone 1,2-dihydroxy-3-keto-5-methylthiopentene (DHK-MTPene) depending upon the metal bound in the active site. Fe-containing acireductone dioxygenase (Fe-ARD) produces formate and 2-keto-4-methylthiobutyrate (KMTB), the alpha-ketoacid precursor of methionine in the methionine recycle pathway. Ni-containing acireductone dioxygenase (Ni-ARD) produces methylthiopropionate, carbon monoxide and formate, and does not lie on the methionine recycle pathway. The chain is Acireductone dioxygenase from Leptospira interrogans serogroup Icterohaemorrhagiae serovar copenhageni (strain Fiocruz L1-130).